A 284-amino-acid polypeptide reads, in one-letter code: Nucleotide-binding protein Sbal_3671 (284 aa).

Position 8 to 15 (8 to 15 (GRSGSGKS)) interacts with ATP. 56 to 59 (DVRN) provides a ligand contact to GTP.

It belongs to the RapZ-like family.

Its function is as follows. Displays ATPase and GTPase activities. This chain is Nucleotide-binding protein Sbal_3671, found in Shewanella baltica (strain OS155 / ATCC BAA-1091).